The primary structure comprises 118 residues: uncharacterized protein (118 aa).

The signal sequence occupies residues 1-22; that stretch reads MKMSYLRSGIVGFLAGASLSYA. A coiled-coil region spans residues 41–71; it reads TATEALETDKQLYKKIEKKIEELESSCVKKS.

This is an uncharacterized protein from Schizosaccharomyces pombe (strain 972 / ATCC 24843) (Fission yeast).